Here is a 450-residue protein sequence, read N- to C-terminus: Guanine deaminase (450 aa).

Residues H88 and H90 each coordinate Zn(2+). Residues 90–93 (HAPQ), 218–219 (RF), 245–248 (HLSE), and D335 each bind substrate. Zn(2+) contacts are provided by H245 and D335.

The protein belongs to the metallo-dependent hydrolases superfamily. ATZ/TRZ family. Zn(2+) is required as a cofactor.

The catalysed reaction is guanine + H2O + H(+) = xanthine + NH4(+). It functions in the pathway purine metabolism; guanine degradation; xanthine from guanine: step 1/1. Catalyzes the hydrolytic deamination of guanine, producing xanthine and ammonia. This is Guanine deaminase (guaD) from Dictyostelium discoideum (Social amoeba).